Reading from the N-terminus, the 539-residue chain is Probable protein kinase UbiB (539 aa).

Residues 125–493 (RFDVEPLASA…RRRQGDRWAL (369 aa)) enclose the Protein kinase domain. ATP is bound by residues 131-139 (LASASVAQV) and K153. The active-site Proton acceptor is the D288. 2 helical membrane-spanning segments follow: residues 495–515 (LLGA…AEAA) and 517–537 (LAAP…YLIV).

The protein belongs to the ABC1 family. UbiB subfamily.

The protein localises to the cell inner membrane. Its pathway is cofactor biosynthesis; ubiquinone biosynthesis [regulation]. Its function is as follows. Is probably a protein kinase regulator of UbiI activity which is involved in aerobic coenzyme Q (ubiquinone) biosynthesis. The polypeptide is Probable protein kinase UbiB (Pseudomonas putida (strain W619)).